The following is a 273-amino-acid chain: Ribosomal RNA small subunit methyltransferase A (273 aa).

6 residues coordinate S-adenosyl-L-methionine: Asn18, Leu20, Gly45, Glu66, Asp91, and Asn113.

It belongs to the class I-like SAM-binding methyltransferase superfamily. rRNA adenine N(6)-methyltransferase family. RsmA subfamily.

Its subcellular location is the cytoplasm. The enzyme catalyses adenosine(1518)/adenosine(1519) in 16S rRNA + 4 S-adenosyl-L-methionine = N(6)-dimethyladenosine(1518)/N(6)-dimethyladenosine(1519) in 16S rRNA + 4 S-adenosyl-L-homocysteine + 4 H(+). Specifically dimethylates two adjacent adenosines (A1518 and A1519) in the loop of a conserved hairpin near the 3'-end of 16S rRNA in the 30S particle. May play a critical role in biogenesis of 30S subunits. The polypeptide is Ribosomal RNA small subunit methyltransferase A (Citrobacter koseri (strain ATCC BAA-895 / CDC 4225-83 / SGSC4696)).